A 326-amino-acid chain; its full sequence is tRNA-dihydrouridine(20/20a) synthase (326 aa).

Residues 11 to 13 (PML) and Q63 contribute to the FMN site. Residue C93 is the Proton donor of the active site. FMN is bound by residues K132, H165, 205-207 (NGG), and 227-228 (GR).

The protein belongs to the Dus family. DusA subfamily. It depends on FMN as a cofactor.

The enzyme catalyses 5,6-dihydrouridine(20) in tRNA + NADP(+) = uridine(20) in tRNA + NADPH + H(+). The catalysed reaction is 5,6-dihydrouridine(20) in tRNA + NAD(+) = uridine(20) in tRNA + NADH + H(+). It catalyses the reaction 5,6-dihydrouridine(20a) in tRNA + NADP(+) = uridine(20a) in tRNA + NADPH + H(+). It carries out the reaction 5,6-dihydrouridine(20a) in tRNA + NAD(+) = uridine(20a) in tRNA + NADH + H(+). Functionally, catalyzes the synthesis of 5,6-dihydrouridine (D), a modified base found in the D-loop of most tRNAs, via the reduction of the C5-C6 double bond in target uridines. Specifically modifies U20 and U20a in tRNAs. This Vibrio parahaemolyticus serotype O3:K6 (strain RIMD 2210633) protein is tRNA-dihydrouridine(20/20a) synthase.